We begin with the raw amino-acid sequence, 136 residues long: Large ribosomal subunit protein uL16 (136 aa).

The protein belongs to the universal ribosomal protein uL16 family. Part of the 50S ribosomal subunit.

Functionally, binds 23S rRNA and is also seen to make contacts with the A and possibly P site tRNAs. In Buchnera aphidicola subsp. Baizongia pistaciae (strain Bp), this protein is Large ribosomal subunit protein uL16.